The primary structure comprises 530 residues: Ubiquitin carboxyl-terminal hydrolase 17-like protein 21 (530 aa).

The USP domain occupies 80–375 (AGLQNMGNTC…QAYVLFYIQK (296 aa)). Cysteine 89 (nucleophile) is an active-site residue. The active-site Proton acceptor is histidine 334. Basic and acidic residues-rich tracts occupy residues 382 to 392 (SESVSRGREPR) and 398 to 412 (DTDRRATQGELKRDH). Disordered stretches follow at residues 382 to 412 (SESVSRGREPRALGAEDTDRRATQGELKRDH) and 477 to 530 (NHHP…LVCQ). Polar residues predominate over residues 493–505 (TPTHQESMNTGTL). Residues 510–524 (GRARRSKGKNKHSKR) show a composition bias toward basic residues.

Belongs to the peptidase C19 family. USP17 subfamily.

Its subcellular location is the nucleus. It is found in the endoplasmic reticulum. The enzyme catalyses Thiol-dependent hydrolysis of ester, thioester, amide, peptide and isopeptide bonds formed by the C-terminal Gly of ubiquitin (a 76-residue protein attached to proteins as an intracellular targeting signal).. In terms of biological role, deubiquitinating enzyme that removes conjugated ubiquitin from specific proteins to regulate different cellular processes that may include cell proliferation, progression through the cell cycle, apoptosis, cell migration, and the cellular response to viral infection. The chain is Ubiquitin carboxyl-terminal hydrolase 17-like protein 21 (USP17L21) from Homo sapiens (Human).